Here is a 226-residue protein sequence, read N- to C-terminus: 7-cyano-7-deazaguanine synthase (226 aa).

10 to 20 provides a ligand contact to ATP; the sequence is LSGGLDSATAA. Residues Cys-191, Cys-199, Cys-202, and Cys-205 each coordinate Zn(2+).

The protein belongs to the QueC family. Zn(2+) serves as cofactor.

It carries out the reaction 7-carboxy-7-deazaguanine + NH4(+) + ATP = 7-cyano-7-deazaguanine + ADP + phosphate + H2O + H(+). It functions in the pathway purine metabolism; 7-cyano-7-deazaguanine biosynthesis. In terms of biological role, catalyzes the ATP-dependent conversion of 7-carboxy-7-deazaguanine (CDG) to 7-cyano-7-deazaguanine (preQ(0)). The protein is 7-cyano-7-deazaguanine synthase of Synechococcus sp. (strain CC9605).